Reading from the N-terminus, the 698-residue chain is Trafficking protein particle complex III-specific subunit 85 (698 aa).

Disordered regions lie at residues valine 82–arginine 125 and valine 678–glycine 698. A compositionally biased stretch (basic and acidic residues) spans valine 678–leucine 689.

Belongs to the TRS85 family. As to quaternary structure, part of the multisubunit TRAPP (transport protein particle) III complex composed of BET3, BET5, TRS20, TRS23, TRS31, TRS33 and TRS85.

The protein resides in the preautophagosomal structure. Functionally, specific subunit of the TRAPP III complex that acts as an autophagy-specific guanine nucleotide exchange factor (GEF) for YPT1. TRS85 directs the TRAPP III complex to the phagophore assembly site (PAS) that is involved in autophagosome formation. Required for membrane expansion during autophagy and the CVT pathway. Required for sporulation. Has a role late in meiosis following DNA replication. This chain is Trafficking protein particle complex III-specific subunit 85 (TRS85), found in Saccharomyces cerevisiae (strain ATCC 204508 / S288c) (Baker's yeast).